The primary structure comprises 236 residues: uncharacterized protein (236 aa).

The protein to M.tuberculosis Rv2557.

This is an uncharacterized protein from Mycobacterium tuberculosis (strain CDC 1551 / Oshkosh).